Here is a 95-residue protein sequence, read N- to C-terminus: Small ribosomal subunit protein bS18 (95 aa).

This sequence belongs to the bacterial ribosomal protein bS18 family. In terms of assembly, part of the 30S ribosomal subunit. Forms a tight heterodimer with protein bS6.

Binds as a heterodimer with protein bS6 to the central domain of the 16S rRNA, where it helps stabilize the platform of the 30S subunit. The polypeptide is Small ribosomal subunit protein bS18 (Rickettsia rickettsii (strain Sheila Smith)).